A 226-amino-acid polypeptide reads, in one-letter code: UPF0758 protein CHY_0341 (226 aa).

The MPN domain occupies 104-226 (NFLNPDDVYN…YISMKAERLF (123 aa)). Positions 175, 177, and 188 each coordinate Zn(2+). The short motif at 175–188 (HNHPSGDPTPSKED) is the JAMM motif element.

The protein belongs to the UPF0758 family.

The polypeptide is UPF0758 protein CHY_0341 (Carboxydothermus hydrogenoformans (strain ATCC BAA-161 / DSM 6008 / Z-2901)).